Consider the following 145-residue polypeptide: Cytochrome c-type biogenesis protein CcmE (145 aa).

At 1 to 7 (MKAKHQR) the chain is on the cytoplasmic side. Residues 8–28 (LILAVAALCGVAGAGVLAASA) traverse the membrane as a helical; Signal-anchor for type II membrane protein segment. Residues 29 to 145 (LRDEAAYFRT…PKNMKAAVEG (117 aa)) lie on the Periplasmic side of the membrane. Residues histidine 123 and tyrosine 127 each coordinate heme.

Belongs to the CcmE/CycJ family.

Its subcellular location is the cell inner membrane. In terms of biological role, heme chaperone required for the biogenesis of c-type cytochromes. Transiently binds heme delivered by CcmC and transfers the heme to apo-cytochromes in a process facilitated by CcmF and CcmH. The polypeptide is Cytochrome c-type biogenesis protein CcmE (Sphingopyxis alaskensis (strain DSM 13593 / LMG 18877 / RB2256) (Sphingomonas alaskensis)).